The sequence spans 72 residues: Large ribosomal subunit protein bL31 (72 aa).

4 residues coordinate Zn(2+): C16, C18, C37, and C40.

It belongs to the bacterial ribosomal protein bL31 family. Type A subfamily. Part of the 50S ribosomal subunit. Zn(2+) serves as cofactor.

Binds the 23S rRNA. In Idiomarina loihiensis (strain ATCC BAA-735 / DSM 15497 / L2-TR), this protein is Large ribosomal subunit protein bL31.